Reading from the N-terminus, the 105-residue chain is MIASKFGIGQQVRHSLLGYLGVVVDIDPEYSLDEPEVDELAVNAELRAAPWYHVVMEDDDGQPVHTYLAEAQLSGEMQEEHPEQPSMDELARSIRQQLQAPRLRN.

Residues 75–105 (GEMQEEHPEQPSMDELARSIRQQLQAPRLRN) are disordered.

It belongs to the HspQ family.

Its subcellular location is the cytoplasm. Functionally, involved in the degradation of certain denaturated proteins, including DnaA, during heat shock stress. The polypeptide is Heat shock protein HspQ (Cronobacter sakazakii (strain ATCC BAA-894) (Enterobacter sakazakii)).